Here is a 348-residue protein sequence, read N- to C-terminus: Protein RecA (348 aa).

ATP is bound at residue 65 to 72 (GPESSGKT).

This sequence belongs to the RecA family.

Its subcellular location is the cytoplasm. Functionally, can catalyze the hydrolysis of ATP in the presence of single-stranded DNA, the ATP-dependent uptake of single-stranded DNA by duplex DNA, and the ATP-dependent hybridization of homologous single-stranded DNAs. It interacts with LexA causing its activation and leading to its autocatalytic cleavage. The chain is Protein RecA from Alteromonas mediterranea (strain DSM 17117 / CIP 110805 / LMG 28347 / Deep ecotype).